The chain runs to 429 residues: Enolase (429 aa).

Glutamine 163 provides a ligand contact to (2R)-2-phosphoglycerate. The active-site Proton donor is glutamate 205. Residues aspartate 242, glutamate 286, and aspartate 313 each contribute to the Mg(2+) site. Residues lysine 338, arginine 367, serine 368, and lysine 389 each contribute to the (2R)-2-phosphoglycerate site. The active-site Proton acceptor is lysine 338.

This sequence belongs to the enolase family. Mg(2+) serves as cofactor.

It localises to the cytoplasm. The protein resides in the secreted. Its subcellular location is the cell surface. The catalysed reaction is (2R)-2-phosphoglycerate = phosphoenolpyruvate + H2O. Its pathway is carbohydrate degradation; glycolysis; pyruvate from D-glyceraldehyde 3-phosphate: step 4/5. Its function is as follows. Catalyzes the reversible conversion of 2-phosphoglycerate (2-PG) into phosphoenolpyruvate (PEP). It is essential for the degradation of carbohydrates via glycolysis. The polypeptide is Enolase (Geotalea uraniireducens (strain Rf4) (Geobacter uraniireducens)).